A 64-amino-acid chain; its full sequence is UPF0434 protein Bcen_1934 (64 aa).

This sequence belongs to the UPF0434 family.

The sequence is that of UPF0434 protein Bcen_1934 from Burkholderia orbicola (strain AU 1054).